We begin with the raw amino-acid sequence, 88 residues long: Large ribosomal subunit protein bL27 (88 aa).

Residues 1 to 25 are disordered; it reads MAHKKGASSSRNGRDSNAQRLGVKR. Residues 7–19 show a composition bias toward polar residues; it reads ASSSRNGRDSNAQ.

Belongs to the bacterial ribosomal protein bL27 family.

The chain is Large ribosomal subunit protein bL27 from Nocardia farcinica (strain IFM 10152).